We begin with the raw amino-acid sequence, 225 residues long: Uracil-DNA glycosylase (225 aa).

D61 serves as the catalytic Proton acceptor.

This sequence belongs to the uracil-DNA glycosylase (UDG) superfamily. UNG family.

The protein resides in the cytoplasm. The enzyme catalyses Hydrolyzes single-stranded DNA or mismatched double-stranded DNA and polynucleotides, releasing free uracil.. Its function is as follows. Excises uracil residues from the DNA which can arise as a result of misincorporation of dUMP residues by DNA polymerase or due to deamination of cytosine. This Actinobacillus pleuropneumoniae serotype 5b (strain L20) protein is Uracil-DNA glycosylase.